Consider the following 276-residue polypeptide: Ribosomal RNA small subunit methyltransferase I (276 aa).

It belongs to the methyltransferase superfamily. RsmI family.

It is found in the cytoplasm. The enzyme catalyses cytidine(1402) in 16S rRNA + S-adenosyl-L-methionine = 2'-O-methylcytidine(1402) in 16S rRNA + S-adenosyl-L-homocysteine + H(+). Catalyzes the 2'-O-methylation of the ribose of cytidine 1402 (C1402) in 16S rRNA. The protein is Ribosomal RNA small subunit methyltransferase I of Mycoplasma pneumoniae (strain ATCC 29342 / M129 / Subtype 1) (Mycoplasmoides pneumoniae).